The primary structure comprises 118 residues: Large ribosomal subunit protein uL18 (118 aa).

It belongs to the universal ribosomal protein uL18 family. Part of the 50S ribosomal subunit; part of the 5S rRNA/L5/L18/L25 subcomplex. Contacts the 5S and 23S rRNAs.

Its function is as follows. This is one of the proteins that bind and probably mediate the attachment of the 5S RNA into the large ribosomal subunit, where it forms part of the central protuberance. The protein is Large ribosomal subunit protein uL18 of Campylobacter jejuni subsp. jejuni serotype O:6 (strain 81116 / NCTC 11828).